A 76-amino-acid chain; its full sequence is Exodeoxyribonuclease 7 small subunit (76 aa).

This sequence belongs to the XseB family. As to quaternary structure, heterooligomer composed of large and small subunits.

The protein resides in the cytoplasm. The catalysed reaction is Exonucleolytic cleavage in either 5'- to 3'- or 3'- to 5'-direction to yield nucleoside 5'-phosphates.. Its function is as follows. Bidirectionally degrades single-stranded DNA into large acid-insoluble oligonucleotides, which are then degraded further into small acid-soluble oligonucleotides. In Bacillus cereus (strain G9842), this protein is Exodeoxyribonuclease 7 small subunit.